The primary structure comprises 702 residues: Elongation factor G (702 aa).

A tr-type G domain is found at 8–290; the sequence is ERYRNIGISA…AVIDYLPSPV (283 aa). GTP-binding positions include 17–24, 88–92, and 142–145; these read AHIDAGKT, DTPGH, and NKMD.

Belongs to the TRAFAC class translation factor GTPase superfamily. Classic translation factor GTPase family. EF-G/EF-2 subfamily.

The protein localises to the cytoplasm. Its function is as follows. Catalyzes the GTP-dependent ribosomal translocation step during translation elongation. During this step, the ribosome changes from the pre-translocational (PRE) to the post-translocational (POST) state as the newly formed A-site-bound peptidyl-tRNA and P-site-bound deacylated tRNA move to the P and E sites, respectively. Catalyzes the coordinated movement of the two tRNA molecules, the mRNA and conformational changes in the ribosome. This chain is Elongation factor G, found in Acidovorax ebreus (strain TPSY) (Diaphorobacter sp. (strain TPSY)).